A 432-amino-acid chain; its full sequence is Adenylosuccinate synthetase (432 aa).

GTP contacts are provided by residues 13–19 (GDEGKGK) and 41–43 (GHT). The active-site Proton acceptor is the D14. Residues D14 and G41 each coordinate Mg(2+). IMP is bound by residues 14–17 (DEGK), 39–42 (NAGH), T130, R144, Q225, T240, and R304. Residue H42 is the Proton donor of the active site. Substrate is bound at residue 300-306 (ATTGRKR). Residues R306, 332–334 (KLD), and 415–417 (STG) each bind GTP.

This sequence belongs to the adenylosuccinate synthetase family. In terms of assembly, homodimer. The cofactor is Mg(2+).

The protein resides in the cytoplasm. It catalyses the reaction IMP + L-aspartate + GTP = N(6)-(1,2-dicarboxyethyl)-AMP + GDP + phosphate + 2 H(+). The protein operates within purine metabolism; AMP biosynthesis via de novo pathway; AMP from IMP: step 1/2. Functionally, plays an important role in the de novo pathway of purine nucleotide biosynthesis. Catalyzes the first committed step in the biosynthesis of AMP from IMP. In Alteromonas mediterranea (strain DSM 17117 / CIP 110805 / LMG 28347 / Deep ecotype), this protein is Adenylosuccinate synthetase.